The primary structure comprises 433 residues: Glutamate-1-semialdehyde 2,1-aminomutase (433 aa).

N6-(pyridoxal phosphate)lysine is present on Lys-271.

The protein belongs to the class-III pyridoxal-phosphate-dependent aminotransferase family. HemL subfamily. In terms of assembly, homodimer. Requires pyridoxal 5'-phosphate as cofactor.

Its subcellular location is the cytoplasm. It catalyses the reaction (S)-4-amino-5-oxopentanoate = 5-aminolevulinate. It functions in the pathway porphyrin-containing compound metabolism; protoporphyrin-IX biosynthesis; 5-aminolevulinate from L-glutamyl-tRNA(Glu): step 2/2. The protein operates within porphyrin-containing compound metabolism; chlorophyll biosynthesis. The protein is Glutamate-1-semialdehyde 2,1-aminomutase of Prochlorococcus marinus (strain MIT 9515).